We begin with the raw amino-acid sequence, 348 residues long: tRNA pseudouridine synthase D (348 aa).

Position 27 (F27) interacts with substrate. Residue D80 is the Nucleophile of the active site. N129 lines the substrate pocket. Positions 155-303 (GVPNYFGSQR…VESARRAVLL (149 aa)) constitute a TRUD domain. F329 lines the substrate pocket.

This sequence belongs to the pseudouridine synthase TruD family.

The enzyme catalyses uridine(13) in tRNA = pseudouridine(13) in tRNA. Responsible for synthesis of pseudouridine from uracil-13 in transfer RNAs. The sequence is that of tRNA pseudouridine synthase D from Pectobacterium carotovorum subsp. carotovorum (strain PC1).